The sequence spans 435 residues: Serine--tRNA ligase (435 aa).

Residue 239–241 (TAE) coordinates L-serine. An ATP-binding site is contributed by 270–272 (RAE). Glu293 serves as a coordination point for L-serine. Position 357–360 (357–360 (EISS)) interacts with ATP. An L-serine-binding site is contributed by Ser393.

It belongs to the class-II aminoacyl-tRNA synthetase family. Type-1 seryl-tRNA synthetase subfamily. As to quaternary structure, homodimer. The tRNA molecule binds across the dimer.

The protein localises to the cytoplasm. The enzyme catalyses tRNA(Ser) + L-serine + ATP = L-seryl-tRNA(Ser) + AMP + diphosphate + H(+). It carries out the reaction tRNA(Sec) + L-serine + ATP = L-seryl-tRNA(Sec) + AMP + diphosphate + H(+). It participates in aminoacyl-tRNA biosynthesis; selenocysteinyl-tRNA(Sec) biosynthesis; L-seryl-tRNA(Sec) from L-serine and tRNA(Sec): step 1/1. In terms of biological role, catalyzes the attachment of serine to tRNA(Ser). Is also able to aminoacylate tRNA(Sec) with serine, to form the misacylated tRNA L-seryl-tRNA(Sec), which will be further converted into selenocysteinyl-tRNA(Sec). This chain is Serine--tRNA ligase, found in Parvibaculum lavamentivorans (strain DS-1 / DSM 13023 / NCIMB 13966).